Reading from the N-terminus, the 315-residue chain is Cytochrome c biogenesis protein CcsA (315 aa).

A run of 7 helical transmembrane segments spans residues 17–37 (LGFAAFLFLLMALPISFWAVA), 72–92 (ISNLYESLCFLTWGCTLAQLF), 101–121 (IVSAVATPVSLLSIGFASFVL), 146–166 (VIMCSYAALLIGSILSFGVFL), 221–241 (SITAGFLLLTVGLISGAVWAN), 255–272 (TWALICWLVYAAYLHTRI), and 282–302 (AILAIAGFFVIIVCYIGVNLL).

The protein belongs to the CcmF/CycK/Ccl1/NrfE/CcsA family. As to quaternary structure, may interact with ccs1.

Its subcellular location is the cellular thylakoid membrane. Required during biogenesis of c-type cytochromes (cytochrome c6 and cytochrome f) at the step of heme attachment. The sequence is that of Cytochrome c biogenesis protein CcsA from Prochlorococcus marinus (strain NATL2A).